Consider the following 194-residue polypeptide: dCTP deaminase (194 aa).

Residues arginine 110–arginine 115, aspartate 128, valine 136–glutamate 138, tyrosine 171, lysine 178, and glutamine 182 each bind dCTP. The Proton donor/acceptor role is filled by glutamate 138. The disordered stretch occupies residues asparagine 172–lysine 194.

The protein belongs to the dCTP deaminase family. In terms of assembly, homotrimer.

The enzyme catalyses dCTP + H2O + H(+) = dUTP + NH4(+). It participates in pyrimidine metabolism; dUMP biosynthesis; dUMP from dCTP (dUTP route): step 1/2. Catalyzes the deamination of dCTP to dUTP. This chain is dCTP deaminase, found in Shewanella loihica (strain ATCC BAA-1088 / PV-4).